The primary structure comprises 76 residues: VpAmp1.0 (76 aa).

An N-terminal signal peptide occupies residues 1-22; sequence MKLINLVPVFFVLIIVVDYCHS. Position 41 is an isoleucine amide (Ile41). A propeptide spanning residues 42 to 76 is cleaved from the precursor; it reads GKRSVESQRYVDLNRRDLEQDLQELQDFLDQISEH.

The protein belongs to the non-disulfide-bridged peptide (NDBP) superfamily. Short antimicrobial peptide (group 4) family. In terms of tissue distribution, expressed by the venom gland.

The protein localises to the secreted. Its subcellular location is the target cell membrane. In terms of biological role, antimicrobial peptide with potent activity against Gram-positive bacteria S.aureus (MIC=2.5 uM) and S.agalactiaea (MIC=2.5 uM), and Gram-negative bacteria E.coli (MIC=24 uM) and P.aeruginosa (MIC=2.5 uM), as well as against yeasts Candida albicans (MIC=6.25 uM) and C.glabrata (MIC&gt;50 uM). Also elicits high hemolysis on human erythrocytes (HC(50)=9.2 uM). This chain is VpAmp1.0, found in Mesomexovis punctatus (Scorpion).